The primary structure comprises 162 residues: CASP-like protein 1C1 (162 aa).

The Cytoplasmic portion of the chain corresponds to 1 to 7 (MAKLHRL). Residues 8–28 (ISAVLRLAAAGAAAAAAIIMV) form a helical membrane-spanning segment. Topologically, residues 29–50 (TSHETTSFFGIEMEAKYSYTPS) are extracellular. Residues 51–71 (FVFFVVAFAVAFAYSLLALLA) traverse the membrane as a helical segment. The Cytoplasmic portion of the chain corresponds to 72-79 (RPGSTASR). A helical transmembrane segment spans residues 80 to 100 (LLLLSDVMVGMLLTGAVAATG). Topologically, residues 101–128 (AISQVGKSGNEHAGWLPICAQVQAYCSH) are extracellular. A helical transmembrane segment spans residues 129–149 (VMGALIAGFVSLLLYFLIIMY). Over 150–162 (SLHAVAEPLCSCH) the chain is Cytoplasmic.

Belongs to the Casparian strip membrane proteins (CASP) family. Homodimer and heterodimers.

Its subcellular location is the cell membrane. The chain is CASP-like protein 1C1 from Sorghum bicolor (Sorghum).